Consider the following 209-residue polypeptide: Protein Bel-1 (209 aa).

3 disordered regions span residues 1–30, 123–143, and 156–185; these read MASK…LDLT, FLNS…PATS, and CSRP…GESG. Composition is skewed to polar residues over residues 21 to 30 and 132 to 143; these read SHSTSGLDLT and TPKTDPTRPATS.

Transcriptional transactivator that activates the viral internal promoter (IP), thereby enhancing its own expression. This transactivation is repressed by nuclear factor I. Also transactivates the long terminal repeat (LTR) promoter, thereby inducing structural gene expression, initiating the late phase of infection. It is therefore a key regulator of viral gene expression. It directly binds to and activates DNA target sites of viral promoters and those of distinct cellular genes. Required for viral replication. In Felis catus (Cat), this protein is Protein Bel-1 (bel1).